The sequence spans 148 residues: Large ribosomal subunit protein uL15 (148 aa).

Residues 1–10 show a composition bias toward basic and acidic residues; that stretch reads MQLHNLEYKK. A disordered region spans residues 1-42; it reads MQLHNLEYKKGSRNHKEKRVGRGHGSGLGKTSGRGQDGQKAR. The segment covering 11–22 has biased composition (basic residues); that stretch reads GSRNHKEKRVGR. The span at 23 to 36 shows a compositional bias: gly residues; that stretch reads GHGSGLGKTSGRGQ.

The protein belongs to the universal ribosomal protein uL15 family. Part of the 50S ribosomal subunit.

Binds to the 23S rRNA. The polypeptide is Large ribosomal subunit protein uL15 (Ureaplasma urealyticum serovar 10 (strain ATCC 33699 / Western)).